Here is a 283-residue protein sequence, read N- to C-terminus: Elongation factor Ts (283 aa).

The involved in Mg(2+) ion dislocation from EF-Tu stretch occupies residues 80 to 83 (TDFV).

Belongs to the EF-Ts family.

It is found in the cytoplasm. Associates with the EF-Tu.GDP complex and induces the exchange of GDP to GTP. It remains bound to the aminoacyl-tRNA.EF-Tu.GTP complex up to the GTP hydrolysis stage on the ribosome. This Salmonella choleraesuis (strain SC-B67) protein is Elongation factor Ts.